Reading from the N-terminus, the 818-residue chain is FAD-dependent monooxygenase anuJ (818 aa).

FAD is bound by residues E46, A60, R122, D329, and G342. 3 helical membrane passes run 471–491 (VLWALPLLGMAVAGLLTMFSV), 539–559 (FFYQPFSFFADYGVWYGIMLV), and 571–591 (LSFALLWGMLNMWGIAIFVPI). N614 carries N-linked (GlcNAc...) asparagine glycosylation. The next 2 membrane-spanning stretches (helical) occupy residues 621–641 (ILPVLLATHYATFMDAYLSPV) and 647–667 (AAGFLWELFPVWLSLAQAGLA). The N-linked (GlcNAc...) asparagine glycan is linked to N683. 2 helical membrane passes run 743 to 763 (WDQVFFAIPNLFWIILLFADL) and 778 to 798 (FSALGLIIAGGNGTMLGLMWL).

The protein belongs to the paxM FAD-dependent monooxygenase family.

It localises to the membrane. Its function is as follows. Highly reducing polyketide synthase; part of the gene cluster that mediates the biosynthesis of annullatin D, an alkylated aromatic polyketide with a fused dihydrobenzofuran lactone ring system that exhibits potent agonistic activities toward the cannabinoid receptors. AnuJ does not seem to play a role within the pathway. The annullatin backbone 2-hydroxymethyl-3-pentylphenol is assembled from one acetyl-CoA starter unit and 5 malonyl-CoA elongation units by cooperation of the highly reducing polyketide synthase anuA, the short-chain dehydrogenase anuB and the oxidoreductase anuC, before being hydroxylated at the C-5 alkyl chain by the cytochrome P450 monooxygenase anuE to form (8S)-annullatin E. The prenyltransferase anuH subsequently installs one isoprenyl group at the benzene ring to form (8S)-annullatin J. Enzymatic or nonenzymatic dihydro-benzofuran ring formation between the prenyl and the phenolic hydroxyl groups in (8S)-annullatin J results in two diastereomers (2S,9S)-annullatin H and compound 12. The intermediate (2S,9S)-annullatin H is then converted to (2S,9S)-annullatin D by the FAD-linked oxidoreductase anuG-catalyzed five-member lactone ring formation. The isomer 12 acts as a substrate for the short-chain dehydrogenase anuF and is oxidized to (2R)-annullatin F, which is subsequently acetylated by an acetyltransferase leading to (2R)-annullatin G formation. The remaining enzymes identified within the cluster, anuD, anuI and anuJ, seem not to be involved in annullatin biosynthesis. In Penicillium roqueforti (strain FM164), this protein is FAD-dependent monooxygenase anuJ.